A 173-amino-acid polypeptide reads, in one-letter code: NADH-ubiquinone oxidoreductase chain 6 (173 aa).

The next 5 membrane-spanning stretches (helical) occupy residues 1–21 (MTYF…AVAS), 27–47 (YGVV…LSLG), 48–68 (VSFV…VVFV), 87–107 (VVGY…VGGL), and 139–159 (CGVG…FVVL).

Belongs to the complex I subunit 6 family.

The protein localises to the mitochondrion membrane. It carries out the reaction a ubiquinone + NADH + 5 H(+)(in) = a ubiquinol + NAD(+) + 4 H(+)(out). Core subunit of the mitochondrial membrane respiratory chain NADH dehydrogenase (Complex I) that is believed to belong to the minimal assembly required for catalysis. Complex I functions in the transfer of electrons from NADH to the respiratory chain. The immediate electron acceptor for the enzyme is believed to be ubiquinone. In Larus canus (Common gull), this protein is NADH-ubiquinone oxidoreductase chain 6 (MT-ND6).